Reading from the N-terminus, the 284-residue chain is Formamidopyrimidine-DNA glycosylase (284 aa).

The active-site Schiff-base intermediate with DNA is Pro-2. The active-site Proton donor is Glu-3. Residue Lys-60 is the Proton donor; for beta-elimination activity of the active site. 3 residues coordinate DNA: His-99, Arg-118, and Arg-163. The segment at 248–282 adopts an FPG-type zinc-finger fold; sequence WVYGRQGQPCRTCGQTIERIKLVGRSTHFCPQCQP. Arg-272 serves as the catalytic Proton donor; for delta-elimination activity.

It belongs to the FPG family. In terms of assembly, monomer. Requires Zn(2+) as cofactor.

It catalyses the reaction Hydrolysis of DNA containing ring-opened 7-methylguanine residues, releasing 2,6-diamino-4-hydroxy-5-(N-methyl)formamidopyrimidine.. It carries out the reaction 2'-deoxyribonucleotide-(2'-deoxyribose 5'-phosphate)-2'-deoxyribonucleotide-DNA = a 3'-end 2'-deoxyribonucleotide-(2,3-dehydro-2,3-deoxyribose 5'-phosphate)-DNA + a 5'-end 5'-phospho-2'-deoxyribonucleoside-DNA + H(+). Its function is as follows. Involved in base excision repair of DNA damaged by oxidation or by mutagenic agents. Acts as a DNA glycosylase that recognizes and removes damaged bases. Has a preference for oxidized purines, such as 7,8-dihydro-8-oxoguanine (8-oxoG). Has AP (apurinic/apyrimidinic) lyase activity and introduces nicks in the DNA strand. Cleaves the DNA backbone by beta-delta elimination to generate a single-strand break at the site of the removed base with both 3'- and 5'-phosphates. The protein is Formamidopyrimidine-DNA glycosylase of Acaryochloris marina (strain MBIC 11017).